Consider the following 2497-residue polypeptide: Integrator complex subunit 1 homolog (2497 aa).

The segment covering 1–10 (MMLNKIKRSK) has biased composition (basic residues). Disordered regions lie at residues 1–151 (MMLN…NNNI), 300–337 (QPQP…IKKS), 946–965 (QQQQ…QQPT), 1028–1108 (TTTT…TSSS), 1234–1292 (INNN…NQKS), and 1572–1604 (NNNN…NNIT). Low complexity-rich tracts occupy residues 37 to 46 (SDNNNNNSND), 60 to 151 (NNSI…NNNI), 305 to 333 (QQQQ…QPQQ), 946 to 963 (QQQQ…QQQQ), and 1028 to 1058 (TTTT…SSSL). Residues 1075 to 1091 (SGLSGSSNGINQSSDSI) are compositionally biased toward polar residues. Composition is skewed to low complexity over residues 1097–1108 (STSPTTTTTSSS), 1234–1265 (INNN…NINK), 1272–1289 (HSNS…NKNN), and 1572–1602 (NNNN…NNNN). Residues 1645-1675 (RILKNTTQQKQQKQQQKESVQKSIQSLSKLI) adopt a coiled-coil conformation. Residues 2084 to 2115 (QQQQQQQQQQQQQQKQQSNNSNNINNNNNNNN) are compositionally biased toward low complexity. Disordered stretches follow at residues 2084 to 2123 (QQQQ…QKSK) and 2329 to 2350 (NNNN…NNNN).

It belongs to the Integrator subunit 1 family. In terms of assembly, component of the Integrator complex. The core complex associates with protein phosphatase 2A subunits to form the Integrator-PP2A (INTAC) complex.

The protein localises to the nucleus. Component of the integrator complex, a multiprotein complex that terminates RNA polymerase II (Pol II) transcription in the promoter-proximal region of genes. The integrator complex provides a quality checkpoint during transcription elongation by driving premature transcription termination of transcripts that are unfavorably configured for transcriptional elongation: the complex terminates transcription by (1) catalyzing dephosphorylation of the C-terminal domain (CTD) of Pol II subunit polr2a, (2) degrading the exiting nascent RNA transcript via endonuclease activity and (3) promoting the release of Pol II from bound DNA. The integrator complex is also involved in terminating the synthesis of non-coding Pol II transcripts, such as enhancer RNAs (eRNAs), small nuclear RNAs (snRNAs), telomerase RNAs and long non-coding RNAs (lncRNAs). The polypeptide is Integrator complex subunit 1 homolog (ints1) (Dictyostelium discoideum (Social amoeba)).